We begin with the raw amino-acid sequence, 189 residues long: Ribosome maturation factor RimM (189 aa).

The region spanning 95–177 (EDDEFYYADL…AGLVDDPEEL (83 aa)) is the PRC barrel domain.

It belongs to the RimM family. Binds ribosomal protein uS19.

Its subcellular location is the cytoplasm. Its function is as follows. An accessory protein needed during the final step in the assembly of 30S ribosomal subunit, possibly for assembly of the head region. Essential for efficient processing of 16S rRNA. May be needed both before and after RbfA during the maturation of 16S rRNA. It has affinity for free ribosomal 30S subunits but not for 70S ribosomes. This is Ribosome maturation factor RimM from Rhizobium leguminosarum bv. trifolii (strain WSM2304).